The chain runs to 195 residues: Nicotinamide riboside kinase 2 (195 aa).

ATP is bound at residue glycine 9–threonine 17. Mg(2+) contacts are provided by threonine 16 and aspartate 35. Aspartate 35 functions as the Proton acceptor in the catalytic mechanism. Substrate-binding positions include aspartate 35–phenylalanine 38 and tryptophan 54–aspartate 55. Arginine 130 contacts ATP. Substrate contacts are provided by residues arginine 131 and tyrosine 136–methionine 137. ATP-binding positions include arginine 134–tyrosine 136 and lysine 174–proline 176.

It belongs to the uridine kinase family. NRK subfamily. Monomer. Interacts with ITGB1 alone or when associated with alpha-7, but not with alpha-5. As to expression, expressed in skeletal muscle (at protein level).

It carries out the reaction beta-nicotinamide D-riboside + ATP = beta-nicotinamide D-ribonucleotide + ADP + H(+). It catalyses the reaction beta-D-ribosylnicotinate + ATP = nicotinate beta-D-ribonucleotide + ADP + H(+). The protein operates within cofactor biosynthesis; NAD(+) biosynthesis. Catalyzes the phosphorylation of nicotinamide riboside (NR) and nicotinic acid riboside (NaR) to form nicotinamide mononucleotide (NMN) and nicotinic acid mononucleotide (NaMN). Reduces laminin matrix deposition and cell adhesion to laminin, but not to fibronectin. Involved in the regulation of PXN at the protein level and of PXN tyrosine phosphorylation. May play a role in the regulation of terminal myogenesis. This chain is Nicotinamide riboside kinase 2 (Nmrk2), found in Mus musculus (Mouse).